The sequence spans 676 residues: Periplasmic alpha-amylase (676 aa).

A signal peptide spans Met1–Ala17. Disulfide bonds link Cys57/Cys75 and Cys121/Cys537. Asn314 lines the Ca(2+) pocket. Asp460 (nucleophile) is an active-site residue. Residue His464 participates in Ca(2+) binding. The active-site Proton donor is Glu503.

It belongs to the glycosyl hydrolase 13 family. Monomer. Ca(2+) is required as a cofactor.

The protein resides in the periplasm. The catalysed reaction is Endohydrolysis of (1-&gt;4)-alpha-D-glucosidic linkages in polysaccharides containing three or more (1-&gt;4)-alpha-linked D-glucose units.. Since only maltooligosaccharides up to a chain length of 6 glucose units are actively transported through the cytoplasmic membrane via the membrane-bound complex of three proteins, MalF, MalG, and MalK, longer maltooligosaccharides must first be degraded by the periplasmic alpha-amylase, the MalS protein. In Escherichia coli (strain K12), this protein is Periplasmic alpha-amylase (malS).